The primary structure comprises 143 residues: Nucleoside diphosphate kinase (143 aa).

ATP is bound by residues Lys-11, Phe-59, Arg-87, Thr-93, Arg-104, and Asn-114. Catalysis depends on His-117, which acts as the Pros-phosphohistidine intermediate.

This sequence belongs to the NDK family. In terms of assembly, homotetramer. Mg(2+) serves as cofactor.

The protein localises to the cytoplasm. The enzyme catalyses a 2'-deoxyribonucleoside 5'-diphosphate + ATP = a 2'-deoxyribonucleoside 5'-triphosphate + ADP. It carries out the reaction a ribonucleoside 5'-diphosphate + ATP = a ribonucleoside 5'-triphosphate + ADP. Its function is as follows. Major role in the synthesis of nucleoside triphosphates other than ATP. The ATP gamma phosphate is transferred to the NDP beta phosphate via a ping-pong mechanism, using a phosphorylated active-site intermediate. The chain is Nucleoside diphosphate kinase from Stutzerimonas stutzeri (strain A1501) (Pseudomonas stutzeri).